The following is a 1086-amino-acid chain: Phosphinothricin tripeptide synthetase PhsC (1086 aa).

Positions 22–43 (RLRAAAAPGPDPAIPRRPDDDG) are disordered. The interval 45 to 484 (VPLSFAQHRL…LAALPVLTRD (440 aa)) is condensation. Positions 510–901 (LEDSARRHPD…GRTDHQVKLR (392 aa)) are adenylation. The disordered stretch occupies residues 983–1007 (GKLDREALPDPLAQSGDTAGNRPPL). Residues 1006–1081 (PLLDPVEERI…GLARSVSAER (76 aa)) form the Carrier domain. At serine 1041 the chain carries O-(pantetheine 4'-phosphoryl)serine.

The protein belongs to the NRP synthetase family. It depends on pantetheine 4'-phosphate as a cofactor.

The enzyme catalyses holo-[peptidyl-carrier protein] + L-alanine + ATP = L-alanyl-[peptidyl-carrier protein] + AMP + diphosphate. It functions in the pathway secondary metabolite biosynthesis; bialaphos biosynthesis. Functionally, involved in the biosynthesis of phosphinothricin tripeptide (PTT), also known as bialaphos (BA), a natural-product antibiotic and potent herbicide. Adenylates L-alanine and loads it onto a peptidyl carrier domain via a thioester linkage to the phosphopanthetheine moiety. Shows weaker activity with aminobutyric acid and L-serine. The chain is Phosphinothricin tripeptide synthetase PhsC from Streptomyces viridochromogenes (strain DSM 40736 / JCM 4977 / BCRC 1201 / Tue 494).